The chain runs to 294 residues: ATP synthase gamma chain (294 aa).

The protein belongs to the ATPase gamma chain family. In terms of assembly, F-type ATPases have 2 components, CF(1) - the catalytic core - and CF(0) - the membrane proton channel. CF(1) has five subunits: alpha(3), beta(3), gamma(1), delta(1), epsilon(1). CF(0) has three main subunits: a, b and c.

It localises to the cell inner membrane. Produces ATP from ADP in the presence of a proton gradient across the membrane. The gamma chain is believed to be important in regulating ATPase activity and the flow of protons through the CF(0) complex. This Campylobacter jejuni subsp. jejuni serotype O:2 (strain ATCC 700819 / NCTC 11168) protein is ATP synthase gamma chain.